The following is a 220-amino-acid chain: Fructose-6-phosphate aldolase 1 (220 aa).

Lysine 85 serves as the catalytic Schiff-base intermediate with substrate.

This sequence belongs to the transaldolase family. Type 3A subfamily. In terms of assembly, homodecamer. Five subunits are arranged as a pentamer, and two ring-like pentamers pack like a donut to form the decamer.

It is found in the cytoplasm. It catalyses the reaction beta-D-fructose 6-phosphate = dihydroxyacetone + D-glyceraldehyde 3-phosphate. Its activity is regulated as follows. Inhibited by glycerol, inorganic phosphate and arabinose 5-phosphate. Functionally, catalyzes the reversible formation of fructose 6-phosphate from dihydroxyacetone (DHA) and D-glyceraldehyde 3-phosphate via an aldolization reaction. Can utilize several aldehydes as acceptor compounds in vitro, and hydroxyacetone (HA) or 1-hydroxy-butan-2-one as alternative donor substrate. Is also able to catalyze the direct stereoselective self-aldol addition of glycolaldehyde to furnish D-(-)-threose, and cross-aldol reactions of glycolaldehyde to other aldehyde acceptors. Is not able to cleave fructose, fructose 1-phosphate, glucose 6-phosphate, sedoheptulose 1,7-bisphosphate, xylulose 5-phosphate, ribulose 5-phosphate, and fructose 1,6-bisphosphate; cannot use dihydroxyacetone phosphate as donor compound nor D-glyceraldehyde as acceptor. Does not display transaldolase activity. In Escherichia coli (strain K12), this protein is Fructose-6-phosphate aldolase 1 (fsaA).